Consider the following 380-residue polypeptide: Probable RAD2-like endonuclease 076L (380 aa).

An N-domain region spans residues M1–I101. The Mg(2+) site is built by D32, E73, E191, E193, D212, D214, and D281. The segment at I156–Y301 is I-domain.

This sequence belongs to the XPG/RAD2 endonuclease family. The cofactor is Mg(2+).

It is found in the host nucleus. In terms of biological role, probable endonuclease. This chain is Probable RAD2-like endonuclease 076L, found in Invertebrate iridescent virus 3 (IIV-3).